A 749-amino-acid chain; its full sequence is Amyloid-beta A4 precursor protein-binding family A member 2 (749 aa).

2 disordered regions span residues 1-94 (MAHQ…PEEE) and 130-343 (DTDE…NNIP). Residue S11 is modified to Phosphoserine. Residues 70–80 (GDSSSDYVNNT) show a composition bias toward polar residues. Composition is skewed to acidic residues over residues 81–94 (SEEEDYDEGLPEEE) and 131–142 (TDECQEAVEEWT). The interval 185–270 (HYCASKEGYQ…SAEACPPIKA (86 aa)) is STXBP1-binding. The residue at position 208 (S208) is a Phosphoserine. Residues 218-227 (DLEDQEEDID) show a composition bias toward acidic residues. The segment covering 237 to 247 (LSMTSITSASE) has biased composition (polar residues). Residues 305 to 315 (RTPEERPKWPH) are compositionally biased toward basic and acidic residues. A PID domain is found at 366–555 (LIDGIIFAAN…IINTQEMYND (190 aa)). PDZ domains are found at residues 568-653 (ELQL…NIVS) and 659-735 (TVLI…MPAA).

As to quaternary structure, part of a multimeric complex containing STXBP1 and syntaxin-1. Binds to the cytoplasmic domain of amyloid-beta protein, and to the nuclear factor NF-kappa-B/p65 via its PDZ domain. Interacts with the N-terminal domain of NECAB3.

In terms of biological role, putative function in synaptic vesicle exocytosis by binding to STXBP1, an essential component of the synaptic vesicle exocytotic machinery. May modulate processing of the amyloid-beta precursor protein (APP) and hence formation of APP-beta. This Pongo abelii (Sumatran orangutan) protein is Amyloid-beta A4 precursor protein-binding family A member 2 (APBA2).